The primary structure comprises 293 residues: MAEGKIIKALSGFYYVLSEGKVFQCRGRGVFRKQKITPLVGDHVEFQATSETEGYIMNIRERKNWLVRPPIANVEQAILVFSAVEPDFSTRLLDRFLVLVESKHIRPIIVVNKMDLVDDQTKPTMEQYIRDYRQIGYDVIETSTITKLGVEQLLSYLEGHISVFAGQSGVGKSSLLNALRPDLQLKTNDISTHLGRGKHTTRHVELLEIGGGLVADTPGFSALELDDIELEELPLYFPEFCERSEECKFRGCLHIAEPKCAVREAVESGKIPSYRYENYISFVEEIKERKPRY.

The 161-residue stretch at 63–223 (KNWLVRPPIA…VADTPGFSAL (161 aa)) folds into the CP-type G domain. Residues 112–115 (NKMD) and 166–174 (GQSGVGKSS) each bind GTP. 4 residues coordinate Zn(2+): cysteine 247, cysteine 252, histidine 254, and cysteine 260.

It belongs to the TRAFAC class YlqF/YawG GTPase family. RsgA subfamily. Monomer. Associates with 30S ribosomal subunit, binds 16S rRNA. Zn(2+) is required as a cofactor.

The protein resides in the cytoplasm. Its function is as follows. One of several proteins that assist in the late maturation steps of the functional core of the 30S ribosomal subunit. Helps release RbfA from mature subunits. May play a role in the assembly of ribosomal proteins into the subunit. Circularly permuted GTPase that catalyzes slow GTP hydrolysis, GTPase activity is stimulated by the 30S ribosomal subunit. The sequence is that of Small ribosomal subunit biogenesis GTPase RsgA from Geobacillus sp. (strain WCH70).